A 111-amino-acid polypeptide reads, in one-letter code: uncharacterized protein (111 aa).

The next 2 helical transmembrane spans lie at 29 to 49 and 52 to 72; these read LLNF…ATAV and ACFA…YLLA.

The protein localises to the membrane. This is an uncharacterized protein from Saccharomyces cerevisiae (strain ATCC 204508 / S288c) (Baker's yeast).